Reading from the N-terminus, the 196-residue chain is Phosphatidyl-N-methylethanolamine N-methyltransferase (196 aa).

Residue Met1 is a topological domain, lumenal. The helical intramembrane region spans 2 to 28 (AIFEINNSFLICAVSIALNPLLWNIAA). Residues 29–40 (RSEYNHKTLTKL) are Lumenal-facing. The helical transmembrane segment at 41-62 (ANGDSKKACYMLAACIFVAGIV) threads the bilayer. Topologically, residues 63–89 (RDLIYQNALKQQPTLGIFMNPLVQGIA) are cytoplasmic. The helical transmembrane segment at 90 to 110 (KLIFCFGSVLVLSSMYKLGLV) threads the bilayer. 94-96 (CFG) contributes to the S-adenosyl-L-methionine binding site. Residues 111 to 153 (GTYLGDYFGFLLPERVSGFPFNVNDNPMYNGSTLCFLSTALRY) are Lumenal-facing. A helical membrane pass occupies residues 154 to 174 (GKVAGLLLTLEVFFVYRIALK). Topologically, residues 175–196 (FEEPFTAKIYAARDSKQAKKSE) are cytoplasmic. 176–177 (EE) provides a ligand contact to S-adenosyl-L-methionine.

Belongs to the class VI-like SAM-binding methyltransferase superfamily. PEMT/PEM2 methyltransferase family.

Its subcellular location is the endoplasmic reticulum membrane. The protein resides in the mitochondrion membrane. The enzyme catalyses a 1,2-diacyl-sn-glycero-3-phospho-N-methylethanolamine + S-adenosyl-L-methionine = a 1,2-diacyl-sn-glycero-3-phospho-N,N-dimethylethanolamine + S-adenosyl-L-homocysteine + H(+). It carries out the reaction a 1,2-diacyl-sn-glycero-3-phospho-N,N-dimethylethanolamine + S-adenosyl-L-methionine = a 1,2-diacyl-sn-glycero-3-phosphocholine + S-adenosyl-L-homocysteine + H(+). It functions in the pathway phospholipid metabolism; phosphatidylcholine biosynthesis. Its function is as follows. Catalyzes the second two steps of the methylation pathway of phosphatidylcholine biosynthesis, the SAM-dependent methylation of phosphatidylmonomethylethanolamine (PMME) to phosphatidyldimethylethanolamine (PDME) and of PDME to phosphatidylcholine (PC). This chain is Phosphatidyl-N-methylethanolamine N-methyltransferase, found in Schizosaccharomyces pombe (strain 972 / ATCC 24843) (Fission yeast).